A 252-amino-acid polypeptide reads, in one-letter code: Imidazole glycerol phosphate synthase subunit HisF (252 aa).

Catalysis depends on residues aspartate 11 and aspartate 130.

The protein belongs to the HisA/HisF family. As to quaternary structure, heterodimer of HisH and HisF.

It localises to the cytoplasm. It carries out the reaction 5-[(5-phospho-1-deoxy-D-ribulos-1-ylimino)methylamino]-1-(5-phospho-beta-D-ribosyl)imidazole-4-carboxamide + L-glutamine = D-erythro-1-(imidazol-4-yl)glycerol 3-phosphate + 5-amino-1-(5-phospho-beta-D-ribosyl)imidazole-4-carboxamide + L-glutamate + H(+). It functions in the pathway amino-acid biosynthesis; L-histidine biosynthesis; L-histidine from 5-phospho-alpha-D-ribose 1-diphosphate: step 5/9. Its function is as follows. IGPS catalyzes the conversion of PRFAR and glutamine to IGP, AICAR and glutamate. The HisF subunit catalyzes the cyclization activity that produces IGP and AICAR from PRFAR using the ammonia provided by the HisH subunit. The chain is Imidazole glycerol phosphate synthase subunit HisF from Staphylococcus epidermidis (strain ATCC 35984 / DSM 28319 / BCRC 17069 / CCUG 31568 / BM 3577 / RP62A).